Here is a 121-residue protein sequence, read N- to C-terminus: uncharacterized protein (121 aa).

Residues 100–121 form a disordered region; sequence KSFSNTKDGKKNDDDNNSSSKS.

This is an uncharacterized protein from Mycoplasma pneumoniae (strain ATCC 29342 / M129 / Subtype 1) (Mycoplasmoides pneumoniae).